The chain runs to 364 residues: Myeloid cell surface antigen CD33 (364 aa).

An N-terminal signal peptide occupies residues 1-17; it reads MPLLLLLPLLWAGALAM. Topologically, residues 18–259 are extracellular; sequence DPNFWLQVQE…KQETRAGVVH (242 aa). One can recognise an Ig-like V-type domain in the interval 19–135; the sequence is PNFWLQVQES…KYSYKSPQLS (117 aa). Cystine bridges form between C36-C169, C41-C101, and C163-C212. Residues N100 and N113 are each glycosylated (N-linked (GlcNAc...) asparagine). R119 contacts N-acetylneuraminate. In terms of domain architecture, Ig-like C2-type spans 145 to 228; sequence PKILIPGTLE…AGVTTERTIQ (84 aa). E154 provides a ligand contact to D-galactose. N-linked (GlcNAc...) asparagine glycans are attached at residues N160, N209, and N230. Residues 260 to 282 traverse the membrane as a helical segment; sequence GAIGGAGVTALLALCLCLIFFIV. The Cytoplasmic segment spans residues 283-364; the sequence is KTHRRKAART…STEYSEVRTQ (82 aa). A disordered region spans residues 290–364; the sequence is ARTAVGRNDT…STEYSEVRTQ (75 aa). 2 short sequence motifs (ITIM motif) span residues 338–343 and 356–361; these read LHYASL and TEYSEV. Phosphotyrosine; by LCK is present on residues Y340 and Y358.

Belongs to the immunoglobulin superfamily. SIGLEC (sialic acid binding Ig-like lectin) family. In terms of assembly, homodimer; disulfide-linked. Interacts with PTPN6/SHP-1 and PTPN11/SHP-2 upon phosphorylation. Interacts with C1QA (via C-terminus); this interaction activates CD33 inhibitory motifs. Post-translationally, glycosylated. Glycosylation at Asn-100 is critical for regulating ligand recognition. In terms of processing, phosphorylation of Tyr-340 is involved in binding to PTPN6 and PTPN11. Phosphorylation of Tyr-358 is involved in binding to PTPN6. LCK phosphorylates Tyr-340 efficiently and Tyr-358 to a lesser extent. Monocytic/myeloid lineage cells. In the brain, CD33 is mainly expressed on microglial cells.

It localises to the cell membrane. It is found in the peroxisome. In terms of biological role, sialic-acid-binding immunoglobulin-like lectin (Siglec) that plays a role in mediating cell-cell interactions and in maintaining immune cells in a resting state. Preferentially recognizes and binds alpha-2,3- and more avidly alpha-2,6-linked sialic acid-bearing glycans. Upon engagement of ligands such as C1q or syalylated glycoproteins, two immunoreceptor tyrosine-based inhibitory motifs (ITIMs) located in CD33 cytoplasmic tail are phosphorylated by Src-like kinases such as LCK. These phosphorylations provide docking sites for the recruitment and activation of protein-tyrosine phosphatases PTPN6/SHP-1 and PTPN11/SHP-2. In turn, these phosphatases regulate downstream pathways through dephosphorylation of signaling molecules. One of the repressive effect of CD33 on monocyte activation requires phosphoinositide 3-kinase/PI3K. This chain is Myeloid cell surface antigen CD33 (CD33), found in Homo sapiens (Human).